The sequence spans 232 residues: Large ribosomal subunit protein uL1 (232 aa).

This sequence belongs to the universal ribosomal protein uL1 family. As to quaternary structure, part of the 50S ribosomal subunit.

Its function is as follows. Binds directly to 23S rRNA. The L1 stalk is quite mobile in the ribosome, and is involved in E site tRNA release. Protein L1 is also a translational repressor protein, it controls the translation of the L11 operon by binding to its mRNA. The sequence is that of Large ribosomal subunit protein uL1 from Liberibacter asiaticus (Citrus greening disease).